Here is a 1763-residue protein sequence, read N- to C-terminus: Non-reducing polyketide synthase PKS19 (1763 aa).

The N-terminal acylcarrier protein transacylase domain (SAT) stretch occupies residues 20–261 (GDQRNLFRKL…PMKKVQGMWH (242 aa)). Positions 390–822 (SSKIAVVGMA…GGNTSIIIEE (433 aa)) constitute a Ketosynthase family 3 (KS3) domain. Residues Cys-561, His-696, and His-740 each act as for beta-ketoacyl synthase activity in the active site. The tract at residues 922–1227 (FAFTGQGTFY…QRDTDNWLTL (306 aa)) is malonyl-CoA:ACP transacylase (MAT) domain. Residues 1307–1439 (HRLISEQYTD…VFYEDPSSWL (133 aa)) form an N-terminal hotdog fold region. One can recognise a PKS/mFAS DH domain in the interval 1307–1609 (HRLISEQYTD…FLQWPRVMLN (303 aa)). Positions 1334-1588 (GVVDGHAMNG…FVGDVYVLQG (255 aa)) are product template (PT) domain. His-1339 functions as the Proton acceptor; for dehydratase activity in the catalytic mechanism. The segment at 1461–1609 (VTGKASKLTT…FLQWPRVMLN (149 aa)) is C-terminal hotdog fold. Catalysis depends on Asp-1522, which acts as the Proton donor; for dehydratase activity. The interval 1619–1690 (AKPAAKVPGK…MEELPSPPAG (72 aa)) is disordered. Positions 1635 to 1647 (PHFKPHHVSRHKP) are enriched in basic residues. A Carrier domain is found at 1689 to 1763 (AGMNDDMEKA…TIQDLKALLR (75 aa)). Ser-1726 is subject to O-(pantetheine 4'-phosphoryl)serine.

Functionally, non-reducing polyketide synthase that mediates the biosynthesis of alternariol (AOH), a micotoxin that seems not to be involved in virulence and oxidative stress tolerance. PKS19 alone is sufficient for AOH synthesis which is initiated by priming with acetyl-CoA, followed by sequential condensations of 6 malonyl-CoA units. The polypeptide is Non-reducing polyketide synthase PKS19 (Phaeosphaeria nodorum (strain SN15 / ATCC MYA-4574 / FGSC 10173) (Glume blotch fungus)).